The following is a 436-amino-acid chain: tRNA(Ile)-lysidine synthase (436 aa).

An ATP-binding site is contributed by 21–26 (SGGVDS).

It belongs to the tRNA(Ile)-lysidine synthase family.

The protein localises to the cytoplasm. It catalyses the reaction cytidine(34) in tRNA(Ile2) + L-lysine + ATP = lysidine(34) in tRNA(Ile2) + AMP + diphosphate + H(+). Functionally, ligates lysine onto the cytidine present at position 34 of the AUA codon-specific tRNA(Ile) that contains the anticodon CAU, in an ATP-dependent manner. Cytidine is converted to lysidine, thus changing the amino acid specificity of the tRNA from methionine to isoleucine. The protein is tRNA(Ile)-lysidine synthase of Aster yellows witches'-broom phytoplasma (strain AYWB).